The following is a 324-amino-acid chain: Arginase (324 aa).

The Mn(2+) site is built by His-115, Asp-142, His-144, and Asp-146. Substrate is bound by residues 144-148 (HTDLH), 155-157 (SGN), and Asp-196. Mn(2+) is bound by residues Asp-244 and Asp-246. Substrate contacts are provided by Thr-258 and Glu-289.

Belongs to the arginase family. Homohexamer. Requires Mn(2+) as cofactor.

It catalyses the reaction L-arginine + H2O = urea + L-ornithine. The protein operates within nitrogen metabolism; urea cycle; L-ornithine and urea from L-arginine: step 1/1. The chain is Arginase (arcA) from Agrobacterium fabrum (strain C58 / ATCC 33970) (Agrobacterium tumefaciens (strain C58)).